The primary structure comprises 72 residues: Translation initiation factor IF-1 2 (72 aa).

The S1-like domain maps to 1–72 (MAKEDVIEMQ…TKGRIVFRTK (72 aa)).

The protein belongs to the IF-1 family. In terms of assembly, component of the 30S ribosomal translation pre-initiation complex which assembles on the 30S ribosome in the order IF-2 and IF-3, IF-1 and N-formylmethionyl-tRNA(fMet); mRNA recruitment can occur at any time during PIC assembly.

The protein resides in the cytoplasm. One of the essential components for the initiation of protein synthesis. Stabilizes the binding of IF-2 and IF-3 on the 30S subunit to which N-formylmethionyl-tRNA(fMet) subsequently binds. Helps modulate mRNA selection, yielding the 30S pre-initiation complex (PIC). Upon addition of the 50S ribosomal subunit IF-1, IF-2 and IF-3 are released leaving the mature 70S translation initiation complex. The polypeptide is Translation initiation factor IF-1 2 (Azoarcus sp. (strain BH72)).